Here is a 263-residue protein sequence, read N- to C-terminus: Putative hydro-lyase GK2103 (263 aa).

It belongs to the D-glutamate cyclase family.

This Geobacillus kaustophilus (strain HTA426) protein is Putative hydro-lyase GK2103.